The primary structure comprises 416 residues: 3-phosphoshikimate 1-carboxyvinyltransferase (416 aa).

Residues Lys-20, Ser-21, and Arg-25 each contribute to the 3-phosphoshikimate site. Residue Lys-20 coordinates phosphoenolpyruvate. Residues Gly-88 and Arg-116 each coordinate phosphoenolpyruvate. Residues Ser-159, Ser-160, Gln-161, Ser-186, Asp-300, and Lys-327 each coordinate 3-phosphoshikimate. Gln-161 is a binding site for phosphoenolpyruvate. Asp-300 serves as the catalytic Proton acceptor. Positions 331 and 373 each coordinate phosphoenolpyruvate.

Belongs to the EPSP synthase family. Monomer.

The protein resides in the cytoplasm. The catalysed reaction is 3-phosphoshikimate + phosphoenolpyruvate = 5-O-(1-carboxyvinyl)-3-phosphoshikimate + phosphate. It functions in the pathway metabolic intermediate biosynthesis; chorismate biosynthesis. Its function is as follows. Catalyzes the transfer of the enolpyruvyl moiety of phosphoenolpyruvate (PEP) to the 5-hydroxyl of shikimate-3-phosphate (S3P) to produce enolpyruvyl shikimate-3-phosphate and inorganic phosphate. The protein is 3-phosphoshikimate 1-carboxyvinyltransferase of Archaeoglobus fulgidus (strain ATCC 49558 / DSM 4304 / JCM 9628 / NBRC 100126 / VC-16).